Consider the following 209-residue polypeptide: Kynurenine formamidase (209 aa).

W19 contacts substrate. Residues H49, H53, and D55 each coordinate Zn(2+). Residue H59 is the Proton donor/acceptor of the active site. Zn(2+) contacts are provided by H160 and E172.

It belongs to the Cyclase 1 superfamily. KynB family. Homodimer. Zn(2+) is required as a cofactor.

The catalysed reaction is N-formyl-L-kynurenine + H2O = L-kynurenine + formate + H(+). It participates in amino-acid degradation; L-tryptophan degradation via kynurenine pathway; L-kynurenine from L-tryptophan: step 2/2. Functionally, catalyzes the hydrolysis of N-formyl-L-kynurenine to L-kynurenine, the second step in the kynurenine pathway of tryptophan degradation. The sequence is that of Kynurenine formamidase from Geobacillus thermodenitrificans (strain NG80-2).